Here is a 730-residue protein sequence, read N- to C-terminus: MEIGTEISRKIRGAIKGKLQELGAYVDEELPDYIMVMVANKKSQEQMTEDLSLFLGNNTVRFTVWLHGVLDKLRSVTTEPSGTKSSEPNIFESNHSSSKSSSCVSDERRREDTLPPLAVSSTRSERTDSRVSTSSQEQRNTASRQSCEDGSASRLMSTVKPLRELSPSEAVIDIKPEPDDLIDEDLNFVQENPLSRKKPIVTVTYGSSRPTAEIYRPPASRSADGSLQVHRLPQQGNLQGNRQLDTQSCRSLETVQLCNPEAFGSLAESYRPTSKLSADKVGSEEEGSRKRRLPIVSSVVKVKKFCNDGEEEEEEDDYGLRTGSISSSVSVPAKPERRPSLPPSKQVNKNLILKAISEAQESVTKTTNYSAVPQKQTVPVAPRTRISPEESHLEVIHLQSRLPALCSQLQVEEPKEQAVEGIQGAEQKELSSRLQVDPVIEDTLQVTQDYYDGESMVHTDTRSFILKKPKLSEEIAAQNQQLGKRATEAMRVLSGRLIQTRDQIAQPEKPASPKFIVTLDGVPSPPGYLSDQEEEDMYITEGLKPIPQNICAGKGLKGLRAQQMQIVTRQLDSSDVEMEQLNVLQKQEKVLERCKYWPACKNGDECVYHHPTQPCKVFPNCKFADKCLFIHPNCKYDAKCTKPDCPYTHASRRNPLPSPKPVPLPTQSVSSSSPLCKFFPACKKMECPFYHPKHCRFNTQCTRPDCTFYHPTIAVPPRHALKWTRTQTSE.

The segment covering 76–92 has biased composition (polar residues); it reads VTTEPSGTKSSEPNIFE. Disordered stretches follow at residues 76 to 154, 269 to 290, and 307 to 345; these read VTTE…SASR, SYRP…GSRK, and NDGE…PPSK. Positions 93–104 are enriched in low complexity; it reads SNHSSSKSSSCV. Residues 130–145 are compositionally biased toward polar residues; the sequence is RVSTSSQEQRNTASRQ. The segment covering 277-288 has biased composition (basic and acidic residues); the sequence is SADKVGSEEEGS. Residues 308-317 show a composition bias toward acidic residues; it reads DGEEEEEEDD. 5 C3H1-type zinc fingers span residues 588-613, 614-633, 634-649, 676-693, and 695-713; these read EKVL…HPTQ, PCKV…IHPN, CKYD…PYTH, CKFF…YHPK, and CRFN…HPTI.

This sequence belongs to the ZC3H14 family. In terms of assembly, homodimer; facilitating circular RNAs (circRNAs) formation.

It localises to the nucleus speckle. Its function is as follows. RNA-binding protein involved in the biogenesis of circular RNAs (circRNAs), which are produced by back-splicing circularization of pre-mRNAs. Acts by binding to both exon-intron boundary and 3'-UTR of pre-mRNAs to promote circRNA biogenesis through dimerization and the association with the spliceosome. Also binds the poly(A) tail of mRNAs; controlling poly(A) length. The sequence is that of Zinc finger CCCH domain-containing protein 14 (ZC3H14) from Gallus gallus (Chicken).